A 753-amino-acid polypeptide reads, in one-letter code: Polyadenylate-binding protein, cytoplasmic and nuclear (753 aa).

Positions 1 to 26 (MSAEVSTTPAADNTVNGTPEATNAAA) are enriched in polar residues. The segment at 1 to 52 (MSAEVSTTPAADNTVNGTPEATNAAATSAPEVTAVESASPSTTPSASQPHSA) is disordered. Over residues 37-52 (SASPSTTPSASQPHSA) the composition is skewed to low complexity. RRM domains lie at 52–130 (ASLY…WSQR), 140–217 (GNVF…HHIS), 233–310 (TNVY…RAQK), and 336–460 (VNLY…LAQR). Disordered stretches follow at residues 367-417 (VMRD…TEKK) and 602-645 (MGQG…REEV). The span at 379 to 417 (ESEKEKEKESNKENEKEGEEKTEEKPKESEEEPKKTEKK) shows a compositional bias: basic and acidic residues. Gly residues predominate over residues 605 to 631 (GIRGPGYGQGRGGAPVQGGPRPQGGRG). A PABC domain is found at 648–725 (TGGLTAQTLS…ALSVYDEYMK (78 aa)). A disordered region spans residues 728 to 753 (GEGEAPAESAKPKEDAAETATEENKS). Residues 737 to 753 (AKPKEDAAETATEENKS) are compositionally biased toward basic and acidic residues.

The protein belongs to the polyadenylate-binding protein type-1 family.

It localises to the cytoplasm. It is found in the nucleus. Binds the poly(A) tail of mRNA. Appears to be an important mediator of the multiple roles of the poly(A) tail in mRNA biogenesis, stability and translation. In the nucleus, involved in both mRNA cleavage and polyadenylation. Is also required for efficient mRNA export to the cytoplasm. Acts in concert with a poly(A)-specific nuclease (PAN) to affect poly(A) tail shortening, which may occur concomitantly with either nucleocytoplasmic mRNA transport or translational initiation. In the cytoplasm, stimulates translation initiation and regulates mRNA decay through translation termination-coupled poly(A) shortening, probably mediated by PAN. This is Polyadenylate-binding protein, cytoplasmic and nuclear (pab1) from Aspergillus fumigatus (strain ATCC MYA-4609 / CBS 101355 / FGSC A1100 / Af293) (Neosartorya fumigata).